Consider the following 484-residue polypeptide: ATP synthase subunit beta (484 aa).

168-175 (GGAGVGKT) serves as a coordination point for ATP.

Belongs to the ATPase alpha/beta chains family. In terms of assembly, F-type ATPases have 2 components, CF(1) - the catalytic core - and CF(0) - the membrane proton channel. CF(1) has five subunits: alpha(3), beta(3), gamma(1), delta(1), epsilon(1). CF(0) has three main subunits: a(1), b(2) and c(9-12). The alpha and beta chains form an alternating ring which encloses part of the gamma chain. CF(1) is attached to CF(0) by a central stalk formed by the gamma and epsilon chains, while a peripheral stalk is formed by the delta and b chains.

It is found in the cell membrane. The enzyme catalyses ATP + H2O + 4 H(+)(in) = ADP + phosphate + 5 H(+)(out). Functionally, produces ATP from ADP in the presence of a proton gradient across the membrane. The catalytic sites are hosted primarily by the beta subunits. The protein is ATP synthase subunit beta of Arthrobacter sp. (strain FB24).